Here is a 441-residue protein sequence, read N- to C-terminus: CBL-interacting serine/threonine-protein kinase 6 (441 aa).

The 255-residue stretch at 24-278 (YELGRLLGHG…IEKVMDSPWF (255 aa)) folds into the Protein kinase domain. Residues 30–38 (LGHGTFAKV) and lysine 53 contribute to the ATP site. Aspartate 146 serves as the catalytic Proton acceptor. The segment at 164–193 (DFGLSAFTEHLKQDGLLHTTCGTPAYVAPE) is activation loop. The residue at position 168 (serine 168) is a Phosphoserine. Threonine 182 carries the post-translational modification Phosphothreonine. Positions 310–334 (EETETLNAFHIIALSEGFDLSPLFE) constitute an NAF domain. The PPI stretch occupies residues 341 to 371 (KREMRFATSRPASSVISSLEEAARVGNKFDV).

It belongs to the protein kinase superfamily. CAMK Ser/Thr protein kinase family. SNF1 subfamily. As to quaternary structure, part of a K(+)-channel calcium-sensing kinase/phosphatase complex composed by a calcium sensor CBL (CBL1, CBL2, CBL3 or CBL9), a kinase CIPK (CIPK6, CIPK16 or CIPK23), a phosphatase PP2C (AIP1) and a K(+)-channel (AKT1). Interacts with AKT1, AKT2,CBL1, CBL2, CBL3, CBL4/SOS3 and CBL9. It depends on Mn(2+) as a cofactor. Post-translationally, autophosphorylated. Expressed in roots and shoots.

The protein resides in the endoplasmic reticulum. The catalysed reaction is L-seryl-[protein] + ATP = O-phospho-L-seryl-[protein] + ADP + H(+). It catalyses the reaction L-threonyl-[protein] + ATP = O-phospho-L-threonyl-[protein] + ADP + H(+). CIPK serine-threonine protein kinases interact with CBL proteins. Binding of a CBL protein to the regulatory NAF domain of CIPK protein lead to the activation of the kinase in a calcium-dependent manner. Downstream of CBL1, CBL2, CBL3 and CBL9, regulates by phosphorylation the K(+) conductance and uptake of AKT1. Binds to CBL4 to modulate AKT2 activity by promoting a kinase interaction-dependent but phosphorylation-independent translocation of the channel to the plasma membrane. The protein is CBL-interacting serine/threonine-protein kinase 6 (CIPK6) of Arabidopsis thaliana (Mouse-ear cress).